The following is a 1209-amino-acid chain: Nitric oxide synthase (1209 aa).

Ser-103 lines the (6R)-L-erythro-5,6,7,8-tetrahydrobiopterin pocket. Residue Cys-181 participates in heme b binding. 5 residues coordinate L-arginine: Gln-244, Trp-353, Tyr-354, Glu-358, and Asn-363. Trp-444 and Phe-457 together coordinate (6R)-L-erythro-5,6,7,8-tetrahydrobiopterin. Heme b is bound at residue Tyr-472. A calmodulin-binding region spans residues 491-511 (VHRKFHFKQIARAVKFTSKLF). A Flavodoxin-like domain is found at 521–723 (ATILYATETG…QFRAWSSKIF (203 aa)). Residue 527–531 (TETGK) coordinates FMN. The segment at 603-622 (RGDGTSDLGSGTFKTPTPKS) is disordered. 669–700 (VFGLGSSAYPKFCHFGKTVDKILGDLGGERIL) is a binding site for FMN. Positions 776-1021 (KQLITCKVKE…IRRAPSFHMP (246 aa)) constitute an FAD-binding FR-type domain. Residues 811-822 (YDPGDHVGVLAC) and 954-964 (LQPRFYSISSS) contribute to the FAD site. NADP(+)-binding positions include 1028–1147 (LILV…QQKL) and 1128–1143 (NGHF…AEEV).

It belongs to the NOS family. The cofactor is heme b. FAD is required as a cofactor. Requires FMN as cofactor. Constitutively expressed at a low level in the larval fat body, hemocyte, Malpighian tubule, midgut, silk gland and adult antenna.

It catalyses the reaction 2 L-arginine + 3 NADPH + 4 O2 + H(+) = 2 L-citrulline + 2 nitric oxide + 3 NADP(+) + 4 H2O. Its activity is regulated as follows. Expression is dependent on and stimulated by NADPH, calcium, BH4 and calmodulin. The activity is not dependent on FAD and is not stimulated by its presence. Functionally, produces nitric oxide (NO) which is a messenger molecule with diverse functions throughout the body. Involved in the induction of immune gene expression. The protein is Nitric oxide synthase of Bombyx mori (Silk moth).